A 364-amino-acid polypeptide reads, in one-letter code: tRNA 2-selenouridine synthase (364 aa).

The region spanning Leu14–Trp137 is the Rhodanese domain. Cys97 acts as the S-selanylcysteine intermediate in catalysis.

This sequence belongs to the SelU family. In terms of assembly, monomer.

It catalyses the reaction 5-methylaminomethyl-2-thiouridine(34) in tRNA + selenophosphate + (2E)-geranyl diphosphate + H2O + H(+) = 5-methylaminomethyl-2-selenouridine(34) in tRNA + (2E)-thiogeraniol + phosphate + diphosphate. The enzyme catalyses 5-methylaminomethyl-2-thiouridine(34) in tRNA + (2E)-geranyl diphosphate = 5-methylaminomethyl-S-(2E)-geranyl-thiouridine(34) in tRNA + diphosphate. It carries out the reaction 5-methylaminomethyl-S-(2E)-geranyl-thiouridine(34) in tRNA + selenophosphate + H(+) = 5-methylaminomethyl-2-(Se-phospho)selenouridine(34) in tRNA + (2E)-thiogeraniol. The catalysed reaction is 5-methylaminomethyl-2-(Se-phospho)selenouridine(34) in tRNA + H2O = 5-methylaminomethyl-2-selenouridine(34) in tRNA + phosphate. Its function is as follows. Involved in the post-transcriptional modification of the uridine at the wobble position (U34) of tRNA(Lys), tRNA(Glu) and tRNA(Gln). Catalyzes the conversion of 2-thiouridine (S2U-RNA) to 2-selenouridine (Se2U-RNA). Acts in a two-step process involving geranylation of 2-thiouridine (S2U) to S-geranyl-2-thiouridine (geS2U) and subsequent selenation of the latter derivative to 2-selenouridine (Se2U) in the tRNA chain. The polypeptide is tRNA 2-selenouridine synthase (Salmonella agona (strain SL483)).